A 200-amino-acid chain; its full sequence is NAD(P)H-dependent FMN reductase C4B3.06c (200 aa).

FMN is bound by residues Arg22, 96-99 (QYNG), and Tyr126.

In terms of assembly, homodimer.

It localises to the cytoplasm. Its subcellular location is the nucleus. It carries out the reaction FMNH2 + NADP(+) = FMN + NADPH + 2 H(+). It catalyses the reaction FMNH2 + NAD(+) = FMN + NADH + 2 H(+). Has several reductase activities that are NAD(P)H-dependent and involve FMN as a cofactor. May be involved in ferric iron assimilation. The chain is NAD(P)H-dependent FMN reductase C4B3.06c from Schizosaccharomyces pombe (strain 972 / ATCC 24843) (Fission yeast).